Here is a 412-residue protein sequence, read N- to C-terminus: Argininosuccinate synthase (412 aa).

ATP is bound by residues 10 to 18 (AYSGGLDTS) and alanine 36. L-citrulline is bound by residues tyrosine 87 and serine 92. A Phosphotyrosine modification is found at tyrosine 87. Position 112 is an N6-acetyllysine (lysine 112). At tyrosine 113 the chain carries Phosphotyrosine. 115-123 (SHGATGKGN) lines the ATP pocket. L-aspartate is bound by residues threonine 119, asparagine 123, and aspartate 124. L-citrulline is bound at residue asparagine 123. An L-citrulline-binding site is contributed by arginine 127. An N6-acetyllysine; by CLOCK mark is found at lysine 165 and lysine 176. The L-citrulline site is built by serine 180 and serine 189. Position 180 is a phosphoserine (serine 180). Threonine 219 bears the Phosphothreonine mark. L-citrulline-binding residues include glutamate 270 and tyrosine 282.

The protein belongs to the argininosuccinate synthase family. Type 1 subfamily. As to quaternary structure, homotetramer. Interacts with NMRAL1. Interacts with CLOCK; in a circadian manner. Forms tissue-specific complexes with ASL, SLC7A1, HSP90AA1 and nitric oxide synthase NOS1, NOS2 or NOS3; the complex regulates cell-autonomous L-arginine synthesis and citrulline recycling while channeling extracellular L-arginine to nitric oxide synthesis pathway. Acetylated by CLOCK in a circadian manner which negatively regulates its enzyme activity. Deacetylated by histone deacetylases. Expressed in adult liver.

It localises to the cytoplasm. The protein resides in the cytosol. It catalyses the reaction L-citrulline + L-aspartate + ATP = 2-(N(omega)-L-arginino)succinate + AMP + diphosphate + H(+). The protein operates within amino-acid biosynthesis; L-arginine biosynthesis; L-arginine from L-ornithine and carbamoyl phosphate: step 2/3. Its pathway is nitrogen metabolism; urea cycle; (N(omega)-L-arginino)succinate from L-aspartate and L-citrulline: step 1/1. Its function is as follows. One of the enzymes of the urea cycle, the metabolic pathway transforming neurotoxic amonia produced by protein catabolism into inocuous urea in the liver of ureotelic animals. Catalyzes the formation of arginosuccinate from aspartate, citrulline and ATP and together with ASL it is responsible for the biosynthesis of arginine in most body tissues. The protein is Argininosuccinate synthase of Homo sapiens (Human).